Here is a 381-residue protein sequence, read N- to C-terminus: Probable serine/threonine-protein kinase PBL22 (381 aa).

A lipid anchor (S-palmitoyl cysteine) is attached at C3. T64 is subject to Phosphothreonine. In terms of domain architecture, Protein kinase spans F75–I351. ATP is bound by residues I81–V89 and K103. At Y148 the chain carries Phosphotyrosine. Residue D201 is the Proton acceptor of the active site. S235 is subject to Phosphoserine. T236 and T241 each carry phosphothreonine. Y249 bears the Phosphotyrosine mark. Residues R361–Y381 form a disordered region.

The protein belongs to the protein kinase superfamily. Ser/Thr protein kinase family. Palmitoylation at Cys-3 and Cys-6 are required for plasma membrane location.

The protein localises to the cell membrane. The enzyme catalyses L-seryl-[protein] + ATP = O-phospho-L-seryl-[protein] + ADP + H(+). It carries out the reaction L-threonyl-[protein] + ATP = O-phospho-L-threonyl-[protein] + ADP + H(+). May be involved in plant defense signaling. The polypeptide is Probable serine/threonine-protein kinase PBL22 (Arabidopsis thaliana (Mouse-ear cress)).